We begin with the raw amino-acid sequence, 73 residues long: Putative antitoxin VapB21 (73 aa).

This sequence belongs to the UPF0330 family.

In terms of biological role, possibly the antitoxin component of a type II toxin-antitoxin (TA) system. Its cognate toxin is VapC21 (Potential). This is Putative antitoxin VapB21 (vapB21) from Sulfurisphaera tokodaii (strain DSM 16993 / JCM 10545 / NBRC 100140 / 7) (Sulfolobus tokodaii).